We begin with the raw amino-acid sequence, 246 residues long: Exosome complex component Rrp41 (246 aa).

The protein belongs to the RNase PH family. Rrp41 subfamily. Component of the archaeal exosome complex. Forms a hexameric ring-like arrangement composed of 3 Rrp41-Rrp42 heterodimers. The hexameric ring associates with a trimer of Rrp4 and/or Csl4 subunits.

The protein localises to the cytoplasm. Catalytic component of the exosome, which is a complex involved in RNA degradation. Has 3'-&gt;5' exoribonuclease activity. Can also synthesize heteromeric RNA-tails. The protein is Exosome complex component Rrp41 of Aeropyrum pernix (strain ATCC 700893 / DSM 11879 / JCM 9820 / NBRC 100138 / K1).